A 171-amino-acid polypeptide reads, in one-letter code: 3-hydroxydecanoyl-[acyl-carrier-protein] dehydratase (171 aa).

Residue histidine 71 is part of the active site.

Belongs to the thioester dehydratase family. FabA subfamily. Homodimer.

It localises to the cytoplasm. It carries out the reaction a (3R)-hydroxyacyl-[ACP] = a (2E)-enoyl-[ACP] + H2O. The enzyme catalyses (3R)-hydroxydecanoyl-[ACP] = (2E)-decenoyl-[ACP] + H2O. The catalysed reaction is (2E)-decenoyl-[ACP] = (3Z)-decenoyl-[ACP]. It functions in the pathway lipid metabolism; fatty acid biosynthesis. Necessary for the introduction of cis unsaturation into fatty acids. Catalyzes the dehydration of (3R)-3-hydroxydecanoyl-ACP to E-(2)-decenoyl-ACP and then its isomerization to Z-(3)-decenoyl-ACP. Can catalyze the dehydratase reaction for beta-hydroxyacyl-ACPs with saturated chain lengths up to 16:0, being most active on intermediate chain length. The protein is 3-hydroxydecanoyl-[acyl-carrier-protein] dehydratase of Rhizobium rhizogenes (strain K84 / ATCC BAA-868) (Agrobacterium radiobacter).